The sequence spans 243 residues: Probable transcriptional regulatory protein Smlt3713 (243 aa).

Belongs to the TACO1 family.

It is found in the cytoplasm. The sequence is that of Probable transcriptional regulatory protein Smlt3713 from Stenotrophomonas maltophilia (strain K279a).